Consider the following 150-residue polypeptide: MIP18 family protein FAM96A (150 aa).

The protein belongs to the MIP18 family.

May play a role in chromosome segregation through establishment of sister chromatid cohesion. This is MIP18 family protein FAM96A (fam96A) from Dictyostelium discoideum (Social amoeba).